The following is a 366-amino-acid chain: DNA integrity scanning protein DisA (366 aa).

A DAC domain is found at 21-159 (VHTLKGTLQR…EGKSHMLEQP (139 aa)). ATP is bound by residues G88, L106, and 119 to 123 (TRHRS).

This sequence belongs to the DisA family. As to quaternary structure, homooctamer. Mg(2+) is required as a cofactor.

The enzyme catalyses 2 ATP = 3',3'-c-di-AMP + 2 diphosphate. Functionally, participates in a DNA-damage check-point. DisA forms globular foci that rapidly scan along the chromosomes searching for lesions. Also has diadenylate cyclase activity, catalyzing the condensation of 2 ATP molecules into cyclic di-AMP (c-di-AMP). c-di-AMP likely acts as a signaling molecule that may couple DNA integrity with a cellular process. This is DNA integrity scanning protein DisA from Corynebacterium glutamicum (strain ATCC 13032 / DSM 20300 / JCM 1318 / BCRC 11384 / CCUG 27702 / LMG 3730 / NBRC 12168 / NCIMB 10025 / NRRL B-2784 / 534).